A 382-amino-acid chain; its full sequence is MSNRIASDSVMTHTLLVMAGGTGGHVFPGLAVAQALKEQNWHIHWLGTAQRMEADLVPKAGFEISFIDIAGVRGNGLVRLLAAPFKIIKAVIQARGVIKQVKPDVVIGMGGFASGPGGVAAWLMGKPLVLHEQNAAPGMTNRLLARIANKVLTGFAGTFDAQKTADRQGQDVSDSAKYQWVGNPVRAGFATIMPKQISGISRATNVLILGGSLGAKALNENVPLALAKQNEIKVRHQCGKGHLDSVTQLYQNQLGDSGDWQVDEFVEDMPQAYQWADLVICRAGALTVAEVAASGVAAIFVPLPHAVDDHQTKNAQTLVEHEAGYLLAQNELVQGGLTSLLEACLAQPNMLVEMGNKARKLARLDAVQRVTHCCQLLVEKAQ.

Residues 22–24 (TGG), asparagine 134, arginine 186, serine 212, 285–290 (ALTVAE), and glutamine 311 contribute to the UDP-N-acetyl-alpha-D-glucosamine site.

The protein belongs to the glycosyltransferase 28 family. MurG subfamily.

It is found in the cell inner membrane. The enzyme catalyses di-trans,octa-cis-undecaprenyl diphospho-N-acetyl-alpha-D-muramoyl-L-alanyl-D-glutamyl-meso-2,6-diaminopimeloyl-D-alanyl-D-alanine + UDP-N-acetyl-alpha-D-glucosamine = di-trans,octa-cis-undecaprenyl diphospho-[N-acetyl-alpha-D-glucosaminyl-(1-&gt;4)]-N-acetyl-alpha-D-muramoyl-L-alanyl-D-glutamyl-meso-2,6-diaminopimeloyl-D-alanyl-D-alanine + UDP + H(+). It functions in the pathway cell wall biogenesis; peptidoglycan biosynthesis. Functionally, cell wall formation. Catalyzes the transfer of a GlcNAc subunit on undecaprenyl-pyrophosphoryl-MurNAc-pentapeptide (lipid intermediate I) to form undecaprenyl-pyrophosphoryl-MurNAc-(pentapeptide)GlcNAc (lipid intermediate II). In Pseudoalteromonas atlantica (strain T6c / ATCC BAA-1087), this protein is UDP-N-acetylglucosamine--N-acetylmuramyl-(pentapeptide) pyrophosphoryl-undecaprenol N-acetylglucosamine transferase.